We begin with the raw amino-acid sequence, 425 residues long: Putative E3 ubiquitin-protein ligase UBR7 (425 aa).

The UBR-type zinc-finger motif lies at Glu44–Asp116. A PHD-type; atypical zinc finger spans residues Gly132 to Arg188. Glycyl lysine isopeptide (Lys-Gly) (interchain with G-Cter in SUMO2) cross-links involve residues Lys225 and Lys252. Positions Lys225–Asp246 are disordered. A Phosphoserine modification is found at Ser264. Lys274 participates in a covalent cross-link: Glycyl lysine isopeptide (Lys-Gly) (interchain with G-Cter in SUMO2). Ser354 bears the Phosphoserine mark. Residue Lys398 forms a Glycyl lysine isopeptide (Lys-Gly) (interchain with G-Cter in SUMO2) linkage.

As to expression, expressed in sperm (at protein level).

It carries out the reaction S-ubiquitinyl-[E2 ubiquitin-conjugating enzyme]-L-cysteine + [acceptor protein]-L-lysine = [E2 ubiquitin-conjugating enzyme]-L-cysteine + N(6)-ubiquitinyl-[acceptor protein]-L-lysine.. The protein operates within protein modification; protein ubiquitination. Functionally, E3 ubiquitin-protein ligase which is a component of the N-end rule pathway. Recognizes and binds to proteins bearing specific N-terminal residues that are destabilizing according to the N-end rule, leading to their ubiquitination and subsequent degradation. This chain is Putative E3 ubiquitin-protein ligase UBR7 (UBR7), found in Homo sapiens (Human).